The sequence spans 88 residues: HssA/B-like protein 12 (88 aa).

It belongs to the hssA/B family.

The protein is HssA/B-like protein 12 (hssl12) of Dictyostelium discoideum (Social amoeba).